Consider the following 116-residue polypeptide: Large ribosomal subunit protein bL19 (116 aa).

The protein belongs to the bacterial ribosomal protein bL19 family.

In terms of biological role, this protein is located at the 30S-50S ribosomal subunit interface and may play a role in the structure and function of the aminoacyl-tRNA binding site. In Clostridium beijerinckii (strain ATCC 51743 / NCIMB 8052) (Clostridium acetobutylicum), this protein is Large ribosomal subunit protein bL19.